Here is a 352-residue protein sequence, read N- to C-terminus: Phosphoribosylformylglycinamidine cyclo-ligase (352 aa).

The protein belongs to the AIR synthase family.

The protein resides in the cytoplasm. It carries out the reaction 2-formamido-N(1)-(5-O-phospho-beta-D-ribosyl)acetamidine + ATP = 5-amino-1-(5-phospho-beta-D-ribosyl)imidazole + ADP + phosphate + H(+). It participates in purine metabolism; IMP biosynthesis via de novo pathway; 5-amino-1-(5-phospho-D-ribosyl)imidazole from N(2)-formyl-N(1)-(5-phospho-D-ribosyl)glycinamide: step 2/2. In Hahella chejuensis (strain KCTC 2396), this protein is Phosphoribosylformylglycinamidine cyclo-ligase.